Consider the following 718-residue polypeptide: Catalase-peroxidase (718 aa).

Positions W98–Y219 form a cross-link, tryptophyl-tyrosyl-methioninium (Trp-Tyr) (with M-245). H99 acts as the Proton acceptor in catalysis. The tryptophyl-tyrosyl-methioninium (Tyr-Met) (with W-98) cross-link spans Y219 to M245. A heme b-binding site is contributed by H260.

Belongs to the peroxidase family. Peroxidase/catalase subfamily. As to quaternary structure, homodimer or homotetramer. It depends on heme b as a cofactor. Post-translationally, formation of the three residue Trp-Tyr-Met cross-link is important for the catalase, but not the peroxidase activity of the enzyme.

It carries out the reaction H2O2 + AH2 = A + 2 H2O. It catalyses the reaction 2 H2O2 = O2 + 2 H2O. Bifunctional enzyme with both catalase and broad-spectrum peroxidase activity. The protein is Catalase-peroxidase of Acinetobacter baumannii (strain ACICU).